The sequence spans 618 residues: Probable Xaa-Pro aminopeptidase P (618 aa).

The Mn(2+) site is built by aspartate 414, aspartate 425, glutamate 523, and glutamate 537.

The protein belongs to the peptidase M24B family. It depends on Mn(2+) as a cofactor.

It carries out the reaction Release of any N-terminal amino acid, including proline, that is linked to proline, even from a dipeptide or tripeptide.. Catalyzes the removal of a penultimate prolyl residue from the N-termini of peptides. The polypeptide is Probable Xaa-Pro aminopeptidase P (AMPP) (Metarhizium robertsii (strain ARSEF 23 / ATCC MYA-3075) (Metarhizium anisopliae (strain ARSEF 23))).